A 470-amino-acid polypeptide reads, in one-letter code: Synaptotagmin-17 (470 aa).

A disordered region spans residues 54–112; that stretch reads PPWLMASRSNDKDGDSVHTASDVPLTPRTNSPDGRRSSSDTSKSTYSLTRRISSLDSRR. Residues 92–112 are compositionally biased toward low complexity; sequence SDTSKSTYSLTRRISSLDSRR. Phosphoserine occurs at positions 114 and 115. 2 C2 domains span residues 180 to 306 and 317 to 451; these read QLGM…HWWK and ELGE…EQWH.

It belongs to the synaptotagmin family.

It localises to the membrane. In terms of biological role, plays a role in dendrite formation by melanocytes. This chain is Synaptotagmin-17 (Syt17), found in Mus musculus (Mouse).